A 382-amino-acid chain; its full sequence is MAFIYYLTHIHLDFGAVSLLKSECERIGIRRPLLVTDKGVVAAGVAQRAIDAMQGLQVAVFDETPSNPTEAMVRKAAAQYREAGCDGLVAVGGGSSIDLAKGIAILATHEGELTTYATIEGGSARITDKAAPLIAVPTTSGTGSEVARGAIIILDDGRKLGFHSWHLLPKSAVCDPELTLGLPAGLTAATGMDAIAHCIETFLAPAFNPPADGIALDGLERGWGHIERATRDGQDRDARLNMMSASMQGAMAFQKGLGCVHSLSHPLGGLKIDGRTGLHHGTLNAVVMPAVLRFNADAPTVVRDDRYARLRRAMHLPDGADIAQAVHDMTVRLGLPTGLRQMGVTEDMFDKVIAGALVDHCHKTNPKEASAADYRRMLEQSM.

Residues Asp37, Asn67, 94 to 98, 138 to 142, and Lys159 contribute to the NAD(+) site; these read GSSID and TTSGT. Fe cation contacts are provided by Asp193, His197, His261, and His280. His280 is a binding site for NAD(+).

Belongs to the iron-containing alcohol dehydrogenase family. Fe cation serves as cofactor.

It carries out the reaction 4-hydroxybutanoate + NAD(+) = succinate semialdehyde + NADH + H(+). Shows competitive inhibition of GHBDH activity by the product succinic semialdehyde, and non-competitive inhibitions by the three other substrate-product combinations. The conversion of GHB to SSA is activated by two different saturating purified nudix hydrolases, B.methanolicus activator ACT and E.coli NudF. The nudix hydrolases do not activate the reverse reaction. Involved in the degradation of 4-hydroxybutyrate. Catalyzes the interconversion of gamma-hydroxybutyrate (GHB) and succinic semialdehyde (SSA). The protein is 4-hydroxybutyrate dehydrogenase of Cupriavidus necator (Alcaligenes eutrophus).